The following is a 31-amino-acid chain: Alcohol dehydrogenase 1 (31 aa).

Cysteine 7 contributes to the Zn(2+) binding site.

It belongs to the zinc-containing alcohol dehydrogenase family. Class-P subfamily. In terms of assembly, homodimer. The cofactor is Zn(2+).

The protein resides in the cytoplasm. It carries out the reaction a primary alcohol + NAD(+) = an aldehyde + NADH + H(+). The enzyme catalyses a secondary alcohol + NAD(+) = a ketone + NADH + H(+). This Catharanthus roseus (Madagascar periwinkle) protein is Alcohol dehydrogenase 1.